We begin with the raw amino-acid sequence, 112 residues long: Large ribosomal subunit protein uL18 (112 aa).

Belongs to the universal ribosomal protein uL18 family. Part of the 50S ribosomal subunit; part of the 5S rRNA/L5/L18/L25 subcomplex. Contacts the 5S and 23S rRNAs.

In terms of biological role, this is one of the proteins that bind and probably mediate the attachment of the 5S RNA into the large ribosomal subunit, where it forms part of the central protuberance. This is Large ribosomal subunit protein uL18 from Thermus thermophilus (strain ATCC BAA-163 / DSM 7039 / HB27).